Reading from the N-terminus, the 569-residue chain is Probable protein phosphatase 2C BIPP2C1 (569 aa).

2 disordered regions span residues 120 to 214 (EVSP…KVTG) and 251 to 279 (SLDD…GSSI). Over residues 179–188 (ESERGSDADG) the composition is skewed to basic and acidic residues. The PPM-type phosphatase domain occupies 329 to 564 (AAMLPHPSKV…DDVTVVVSVV (236 aa)). Mn(2+) is bound by residues D358, G359, D488, and D555.

This sequence belongs to the PP2C family. Requires Mg(2+) as cofactor. The cofactor is Mn(2+).

It catalyses the reaction O-phospho-L-seryl-[protein] + H2O = L-seryl-[protein] + phosphate. The catalysed reaction is O-phospho-L-threonyl-[protein] + H2O = L-threonyl-[protein] + phosphate. Its function is as follows. May play a role in responses to biotic and abiotic stresses. In Oryza sativa subsp. japonica (Rice), this protein is Probable protein phosphatase 2C BIPP2C1 (BIPP2C1).